The primary structure comprises 236 residues: Biosynthetic peptidoglycan transglycosylase (236 aa).

Residues 17–37 (IVILVALALLALPYLLTILYG) traverse the membrane as a helical segment.

Belongs to the glycosyltransferase 51 family.

Its subcellular location is the cell inner membrane. The catalysed reaction is [GlcNAc-(1-&gt;4)-Mur2Ac(oyl-L-Ala-gamma-D-Glu-L-Lys-D-Ala-D-Ala)](n)-di-trans,octa-cis-undecaprenyl diphosphate + beta-D-GlcNAc-(1-&gt;4)-Mur2Ac(oyl-L-Ala-gamma-D-Glu-L-Lys-D-Ala-D-Ala)-di-trans,octa-cis-undecaprenyl diphosphate = [GlcNAc-(1-&gt;4)-Mur2Ac(oyl-L-Ala-gamma-D-Glu-L-Lys-D-Ala-D-Ala)](n+1)-di-trans,octa-cis-undecaprenyl diphosphate + di-trans,octa-cis-undecaprenyl diphosphate + H(+). It participates in cell wall biogenesis; peptidoglycan biosynthesis. Functionally, peptidoglycan polymerase that catalyzes glycan chain elongation from lipid-linked precursors. This Rhodopseudomonas palustris (strain ATCC BAA-98 / CGA009) protein is Biosynthetic peptidoglycan transglycosylase.